The chain runs to 217 residues: Somatotropin (217 aa).

A signal peptide spans 1–26 (MAPGSRTSLLLAFGLLCLPWLQEGSA). H44 lines the Zn(2+) pocket. C79 and C191 are oxidised to a cystine. A Phosphoserine modification is found at S132. E200 lines the Zn(2+) pocket. C208 and C215 form a disulfide bridge.

This sequence belongs to the somatotropin/prolactin family.

It is found in the secreted. Functionally, plays an important role in growth control. Its major role in stimulating body growth is to stimulate the liver and other tissues to secrete IGF1. It stimulates both the differentiation and proliferation of myoblasts. It also stimulates amino acid uptake and protein synthesis in muscle and other tissues. The sequence is that of Somatotropin (GH1) from Pan troglodytes (Chimpanzee).